Consider the following 369-residue polypeptide: Ubiquitin-conjugating enzyme E2 Q2 (369 aa).

Positions 117–143 (DQPLPTGQNGTTEEVTSEEEEEEEMAE) are disordered. A compositionally biased stretch (acidic residues) spans 131–143 (VTSEEEEEEEMAE). A UBC core domain is found at 198–362 (QASDRLMKEL…VQIHEKNGWY (165 aa)). C298 acts as the Glycyl thioester intermediate in catalysis.

This sequence belongs to the ubiquitin-conjugating enzyme family. Post-translationally, auto-ubiquitinated in vitro. As to expression, detected at embryo implantation sites in the luminal epithelium of pregnant endometrium. Detected at low levels in ovary and liver.

The protein localises to the cytoplasm. It catalyses the reaction S-ubiquitinyl-[E1 ubiquitin-activating enzyme]-L-cysteine + [E2 ubiquitin-conjugating enzyme]-L-cysteine = [E1 ubiquitin-activating enzyme]-L-cysteine + S-ubiquitinyl-[E2 ubiquitin-conjugating enzyme]-L-cysteine.. It participates in protein modification; protein ubiquitination. In terms of biological role, accepts ubiquitin from the E1 complex and catalyzes its covalent attachment to other proteins. In vitro catalyzes 'Lys-48'-linked polyubiquitination. The polypeptide is Ubiquitin-conjugating enzyme E2 Q2 (UBE2Q2) (Oryctolagus cuniculus (Rabbit)).